A 479-amino-acid chain; its full sequence is Adenosylhomocysteinase (479 aa).

Positions 66, 142, and 203 each coordinate substrate. 204-206 (TTT) contributes to the NAD(+) binding site. Substrate is bound by residues K233 and D237. NAD(+) contacts are provided by residues N238, 267–272 (GYGDVG), E290, N325, 346–348 (IGH), and N394.

It belongs to the adenosylhomocysteinase family. Requires NAD(+) as cofactor.

The protein resides in the cytoplasm. It carries out the reaction S-adenosyl-L-homocysteine + H2O = L-homocysteine + adenosine. Its pathway is amino-acid biosynthesis; L-homocysteine biosynthesis; L-homocysteine from S-adenosyl-L-homocysteine: step 1/1. In terms of biological role, may play a key role in the regulation of the intracellular concentration of adenosylhomocysteine. The protein is Adenosylhomocysteinase of Nitratidesulfovibrio vulgaris (strain DSM 19637 / Miyazaki F) (Desulfovibrio vulgaris).